The chain runs to 276 residues: MRMLDGRSMAAEIGRYVVDEAERLAAAGVTPTLAVVLPTADPAAYSYAEIIERTAGKVGVHCVLHEPKGEPAAILDTIDTVAADPTVHGIIVQTPLPGGLTSREVGEHIPTAKDVDGMNPSSLGRLALGLPSFAPATAAAVVEILTRARIPMSGARVCVIGRGPVVGKPVSLLLLAEDATVTICHSRTKGLVSIAHEADIIVSATGHPRLVGAGFVRPGAAVIDVGTVVTETGQVGDVDAAAVSSVAGALTPVPGGVGPVTTMLLLRNTIRAARAA.

NADP(+) is bound by residues 161–163 (GRG), Ser-186, and Thr-227.

The protein belongs to the tetrahydrofolate dehydrogenase/cyclohydrolase family. In terms of assembly, homodimer.

The enzyme catalyses (6R)-5,10-methylene-5,6,7,8-tetrahydrofolate + NADP(+) = (6R)-5,10-methenyltetrahydrofolate + NADPH. It carries out the reaction (6R)-5,10-methenyltetrahydrofolate + H2O = (6R)-10-formyltetrahydrofolate + H(+). Its pathway is one-carbon metabolism; tetrahydrofolate interconversion. In terms of biological role, catalyzes the oxidation of 5,10-methylenetetrahydrofolate to 5,10-methenyltetrahydrofolate and then the hydrolysis of 5,10-methenyltetrahydrofolate to 10-formyltetrahydrofolate. In Frankia casuarinae (strain DSM 45818 / CECT 9043 / HFP020203 / CcI3), this protein is Bifunctional protein FolD 1.